Reading from the N-terminus, the 132-residue chain is Small ribosomal subunit protein eS17B (132 aa).

Ser43 is modified (phosphoserine).

The protein belongs to the eukaryotic ribosomal protein eS17 family. Component of the small ribosomal subunit (SSU). Mature yeast ribosomes consist of a small (40S) and a large (60S) subunit. The 40S small subunit contains 1 molecule of ribosomal RNA (18S rRNA) and at least 33 different proteins. The large 60S subunit contains 3 rRNA molecules (25S, 5.8S and 5S rRNA) and at least 46 different proteins.

It is found in the cytoplasm. Functionally, component of the ribosome, a large ribonucleoprotein complex responsible for the synthesis of proteins in the cell. The small ribosomal subunit (SSU) binds messenger RNAs (mRNAs) and translates the encoded message by selecting cognate aminoacyl-transfer RNA (tRNA) molecules. The large subunit (LSU) contains the ribosomal catalytic site termed the peptidyl transferase center (PTC), which catalyzes the formation of peptide bonds, thereby polymerizing the amino acids delivered by tRNAs into a polypeptide chain. The nascent polypeptides leave the ribosome through a tunnel in the LSU and interact with protein factors that function in enzymatic processing, targeting, and the membrane insertion of nascent chains at the exit of the ribosomal tunnel. This Schizosaccharomyces pombe (strain 972 / ATCC 24843) (Fission yeast) protein is Small ribosomal subunit protein eS17B (rps1702).